An 86-amino-acid chain; its full sequence is Small ribosomal subunit protein bS20 (86 aa).

The protein belongs to the bacterial ribosomal protein bS20 family.

In terms of biological role, binds directly to 16S ribosomal RNA. The polypeptide is Small ribosomal subunit protein bS20 (Bifidobacterium longum subsp. infantis (strain ATCC 15697 / DSM 20088 / JCM 1222 / NCTC 11817 / S12)).